The primary structure comprises 255 residues: 5'-nucleotidase SurE (255 aa).

Residues aspartate 13, aspartate 14, serine 44, and asparagine 100 each coordinate a divalent metal cation.

This sequence belongs to the SurE nucleotidase family. Requires a divalent metal cation as cofactor.

Its subcellular location is the cytoplasm. The enzyme catalyses a ribonucleoside 5'-phosphate + H2O = a ribonucleoside + phosphate. In terms of biological role, nucleotidase that shows phosphatase activity on nucleoside 5'-monophosphates. This chain is 5'-nucleotidase SurE, found in Bacteroides fragilis (strain ATCC 25285 / DSM 2151 / CCUG 4856 / JCM 11019 / LMG 10263 / NCTC 9343 / Onslow / VPI 2553 / EN-2).